A 624-amino-acid chain; its full sequence is Chaperone protein HtpG (624 aa).

Residues methionine 1–arginine 336 form an a; substrate-binding region. The b stretch occupies residues glutamate 337–lysine 552. The segment at leucine 553–glycine 624 is c.

The protein belongs to the heat shock protein 90 family. As to quaternary structure, homodimer.

Its subcellular location is the cytoplasm. In terms of biological role, molecular chaperone. Has ATPase activity. The chain is Chaperone protein HtpG from Enterobacter sp. (strain 638).